A 229-amino-acid chain; its full sequence is Putative N-acetylmannosamine-6-phosphate 2-epimerase (229 aa).

The protein belongs to the NanE family.

It catalyses the reaction an N-acyl-D-glucosamine 6-phosphate = an N-acyl-D-mannosamine 6-phosphate. It functions in the pathway amino-sugar metabolism; N-acetylneuraminate degradation; D-fructose 6-phosphate from N-acetylneuraminate: step 3/5. Its function is as follows. Converts N-acetylmannosamine-6-phosphate (ManNAc-6-P) to N-acetylglucosamine-6-phosphate (GlcNAc-6-P). In Cutibacterium acnes (strain DSM 16379 / KPA171202) (Propionibacterium acnes), this protein is Putative N-acetylmannosamine-6-phosphate 2-epimerase.